The following is a 299-amino-acid chain: Probable endonuclease 4 (299 aa).

Residues His-69, His-110, Glu-145, Asp-179, His-182, His-214, Asp-227, His-229, and Glu-259 each contribute to the Zn(2+) site.

It belongs to the AP endonuclease 2 family. Requires Zn(2+) as cofactor.

It catalyses the reaction Endonucleolytic cleavage to 5'-phosphooligonucleotide end-products.. Endonuclease IV plays a role in DNA repair. It cleaves phosphodiester bonds at apurinic or apyrimidinic (AP) sites, generating a 3'-hydroxyl group and a 5'-terminal sugar phosphate. The protein is Probable endonuclease 4 of Geobacillus kaustophilus (strain HTA426).